Here is a 259-residue protein sequence, read N- to C-terminus: Global transcriptional regulator CodY (259 aa).

Residues 1–155 (MDLLSRARKI…GATVVGMEIL (155 aa)) are GAF domain. Positions 203 to 222 (ASKIADRVGITRSVIVNALR) form a DNA-binding region, H-T-H motif. Serine 215 bears the Phosphoserine mark.

This sequence belongs to the CodY family.

Its subcellular location is the cytoplasm. Its function is as follows. DNA-binding global transcriptional regulator which is involved in the adaptive response to starvation and acts by directly or indirectly controlling the expression of numerous genes in response to nutrient availability. During rapid exponential growth, CodY is highly active and represses genes whose products allow adaptation to nutrient depletion. The sequence is that of Global transcriptional regulator CodY from Oceanobacillus iheyensis (strain DSM 14371 / CIP 107618 / JCM 11309 / KCTC 3954 / HTE831).